Here is a 747-residue protein sequence, read N- to C-terminus: Myotubularin-related protein 12 (747 aa).

The Myotubularin phosphatase domain maps to 205 to 643; the sequence is FDTLKDWCWE…PEIKVWAQRY (439 aa). The interaction with MTM1 stretch occupies residues 449 to 558; sequence VPVFLLFLDC…KGQRKGMRFK (110 aa). Phosphoserine is present on residues serine 564, serine 601, and serine 716.

The protein belongs to the protein-tyrosine phosphatase family. Non-receptor class myotubularin subfamily. In terms of assembly, heterodimer with lipid phosphatase MTM1. Heterodimer with lipid phosphatase MTMR2. Expressed in skeletal muscles (at protein level). Ubiquitous with prominent expression in brain, heart, kidney, placenta, and lung.

The protein resides in the cytoplasm. It is found in the sarcoplasmic reticulum. Its subcellular location is the myofibril. It localises to the sarcomere. Acts as an adapter for the myotubularin-related phosphatases. Regulates phosphatase MTM1 protein stability and possibly its intracellular location. By stabilizing MTM1 protein levels, required for skeletal muscle maintenance but not for myogenesis. This chain is Myotubularin-related protein 12 (MTMR12), found in Homo sapiens (Human).